The chain runs to 502 residues: Membrane protein insertase YidC (502 aa).

A run of 6 helical transmembrane segments spans residues 12–32 (FLIF…FYIY), 286–306 (LDWG…YWIY), 312–332 (WVLS…PLGY), 382–402 (LPIL…IITV), 409–429 (FLWI…VIMG), and 452–472 (ITSV…VLYW).

Belongs to the OXA1/ALB3/YidC family. Type 1 subfamily. In terms of assembly, interacts with the Sec translocase complex via SecD. Specifically interacts with transmembrane segments of nascent integral membrane proteins during membrane integration.

The protein resides in the cell membrane. In terms of biological role, required for the insertion and/or proper folding and/or complex formation of integral membrane proteins into the membrane. Involved in integration of membrane proteins that insert both dependently and independently of the Sec translocase complex, as well as at least some lipoproteins. Aids folding of multispanning membrane proteins. In Aquifex aeolicus (strain VF5), this protein is Membrane protein insertase YidC.